The primary structure comprises 1002 residues: Mitogen-activated protein kinase kinase kinase 21 (1002 aa).

Residues 1–26 (MALPVAEGTADTPLSPARDDSGSTSS) are disordered. One can recognise an SH3 domain in the interval 24-88 (TSSGMWAALY…PASYVAPCGP (65 aa)). The Protein kinase domain maps to 110-390 (LELKELIGAG…QLTAIEEAVL (281 aa)). Residues 116–124 (IGAGGFGQV) and lysine 137 contribute to the ATP site. Aspartate 247 functions as the Proton acceptor in the catalytic mechanism. The residue at position 283 (threonine 283) is a Phosphothreonine; by autocatalysis. Serine 287 bears the Phosphoserine; by autocatalysis and MAP4K1 mark. Leucine-zipper stretches follow at residues 409-430 (IQQM…EEEL) and 444-466 (LRRR…LNVL). Disordered regions lie at residues 508 to 531 (TVQA…PPGS), 574 to 604 (GCTW…NSPW), 640 to 689 (HRKP…VGAP), 721 to 778 (AQAP…SHSS), 797 to 823 (LGNA…SGCE), and 878 to 899 (QSAP…RDLA). Phosphoserine occurs at positions 512, 527, and 531. A Phosphothreonine modification is found at threonine 576. Residues 584-596 (TKERPEGRERVRP) are compositionally biased toward basic and acidic residues. Serine 598 bears the Phosphoserine mark. Residues 661–677 (DSQREDSSEAESREEGS) show a composition bias toward basic and acidic residues. Low complexity-rich tracts occupy residues 740–758 (QPAS…QPSA) and 766–778 (STLL…SHSS).

The protein belongs to the protein kinase superfamily. STE Ser/Thr protein kinase family. MAP kinase kinase kinase subfamily. Homodimer. Interacts with TLR4. Requires Mg(2+) as cofactor. Autophosphorylation on serine and threonine residues within the activation loop plays a role in enzyme activation.

The enzyme catalyses L-seryl-[protein] + ATP = O-phospho-L-seryl-[protein] + ADP + H(+). It carries out the reaction L-threonyl-[protein] + ATP = O-phospho-L-threonyl-[protein] + ADP + H(+). Its activity is regulated as follows. Homodimerization via the leucine zipper domains is required for autophosphorylation and subsequent activation. Its function is as follows. Negative regulator of TLR4 signaling. Does not activate JNK1/MAPK8 pathway, p38/MAPK14, nor ERK2/MAPK1 pathways. This chain is Mitogen-activated protein kinase kinase kinase 21 (Map3k21), found in Mus musculus (Mouse).